Reading from the N-terminus, the 92-residue chain is Small ribosomal subunit protein uS19 (92 aa).

Belongs to the universal ribosomal protein uS19 family.

In terms of biological role, protein S19 forms a complex with S13 that binds strongly to the 16S ribosomal RNA. This Bacillus mycoides (strain KBAB4) (Bacillus weihenstephanensis) protein is Small ribosomal subunit protein uS19.